We begin with the raw amino-acid sequence, 669 residues long: Major S-layer protein (669 aa).

A signal peptide spans 1-24; that stretch reads MKRFAAVSLAALMLLTVFASAASA. N-linked (GlcNAc...) asparagine glycans are attached at residues Asn-36, Asn-70, Asn-116, Asn-600, and Asn-607. Residues 588–648 are disordered; sequence DGEVVDDDED…PTEADGTTPG (61 aa). A compositionally biased stretch (acidic residues) spans 590-627; that stretch reads EVVDDDEDDDNVTEPVDNDTEVEEPTEEPTEGPTEEPT. A helical membrane pass occupies residues 645-665; that stretch reads TTPGFGVVLGLVGLLAVVYLV.

It belongs to the Methanosarcinales S-layer protein family. Post-translationally, glycosylated.

The protein localises to the secreted. It localises to the cell wall. The protein resides in the S-layer. It is found in the cell membrane. In terms of biological role, S-layer protein. The S-layer is a paracrystalline mono-layered assembly of proteins which coat the surface of the cell. In Methanosarcina mazei (strain ATCC BAA-159 / DSM 3647 / Goe1 / Go1 / JCM 11833 / OCM 88) (Methanosarcina frisia), this protein is Major S-layer protein.